Reading from the N-terminus, the 345-residue chain is D-fructose 1,6-bisphosphatase class 2/sedoheptulose 1,7-bisphosphatase (345 aa).

Mn(2+) is bound by residues D33, E57, D97, and E100. Residues E100–T102, Y131, R176–R178, and D198–D200 each bind substrate. E225 serves as a coordination point for Mn(2+).

It belongs to the FBPase class 2 family. In terms of assembly, homotetramer. Mn(2+) serves as cofactor.

It carries out the reaction beta-D-fructose 1,6-bisphosphate + H2O = beta-D-fructose 6-phosphate + phosphate. The catalysed reaction is D-sedoheptulose 1,7-bisphosphate + H2O = D-sedoheptulose 7-phosphate + phosphate. It participates in carbohydrate biosynthesis; Calvin cycle. Catalyzes the hydrolysis of fructose 1,6-bisphosphate (Fru 1,6-P2) and sedoheptulose 1,7-bisphosphate (Sed 1,7-P2) to fructose 6-phosphate and sedoheptulose 7-phosphate, respectively. In Crocosphaera subtropica (strain ATCC 51142 / BH68) (Cyanothece sp. (strain ATCC 51142)), this protein is D-fructose 1,6-bisphosphatase class 2/sedoheptulose 1,7-bisphosphatase.